The following is a 425-amino-acid chain: tRNA(Ile)-lysidine synthase (425 aa).

27 to 32 provides a ligand contact to ATP; that stretch reads SGGLDS.

Belongs to the tRNA(Ile)-lysidine synthase family.

It localises to the cytoplasm. The enzyme catalyses cytidine(34) in tRNA(Ile2) + L-lysine + ATP = lysidine(34) in tRNA(Ile2) + AMP + diphosphate + H(+). Its function is as follows. Ligates lysine onto the cytidine present at position 34 of the AUA codon-specific tRNA(Ile) that contains the anticodon CAU, in an ATP-dependent manner. Cytidine is converted to lysidine, thus changing the amino acid specificity of the tRNA from methionine to isoleucine. This chain is tRNA(Ile)-lysidine synthase, found in Streptococcus gordonii (strain Challis / ATCC 35105 / BCRC 15272 / CH1 / DL1 / V288).